Consider the following 329-residue polypeptide: Replication factor C small subunit 1 (329 aa).

44–51 (GPPGTGKT) serves as a coordination point for ATP.

The protein belongs to the activator 1 small subunits family. RfcS subfamily. In terms of assembly, heteromultimer composed of small subunits (RfcS) and large subunits (RfcL).

Its function is as follows. Part of the RFC clamp loader complex which loads the PCNA sliding clamp onto DNA. This chain is Replication factor C small subunit 1, found in Pyrobaculum islandicum (strain DSM 4184 / JCM 9189 / GEO3).